The sequence spans 488 residues: Malonate-semialdehyde dehydrogenase 1 (488 aa).

Residues Phe-156, Lys-180, Glu-183, Arg-184, Ser-233, and Ser-255 each coordinate NAD(+). Cys-288 functions as the Nucleophile in the catalytic mechanism. NAD(+) is bound at residue Glu-387.

It belongs to the aldehyde dehydrogenase family. IolA subfamily. In terms of assembly, homotetramer.

The enzyme catalyses 3-oxopropanoate + NAD(+) + CoA + H2O = hydrogencarbonate + acetyl-CoA + NADH + H(+). The catalysed reaction is 2-methyl-3-oxopropanoate + NAD(+) + CoA + H2O = propanoyl-CoA + hydrogencarbonate + NADH + H(+). It functions in the pathway polyol metabolism; myo-inositol degradation into acetyl-CoA; acetyl-CoA from myo-inositol: step 7/7. Functionally, catalyzes the oxidation of malonate semialdehyde (MSA) and methylmalonate semialdehyde (MMSA) into acetyl-CoA and propanoyl-CoA, respectively. Is involved in a myo-inositol catabolic pathway. Bicarbonate, and not CO2, is the end-product of the enzymatic reaction. This chain is Malonate-semialdehyde dehydrogenase 1, found in Geobacillus kaustophilus (strain HTA426).